The chain runs to 523 residues: 2-isopropylmalate synthase (523 aa).

The 263-residue stretch at 5 to 267 (VIIFDTTLRD…HTRINHQEIW (263 aa)) folds into the Pyruvate carboxyltransferase domain. Asp-14, His-202, His-204, and Asn-238 together coordinate Mn(2+). The regulatory domain stretch occupies residues 392 to 523 (RLDYFSVQSG…QNKENNKETV (132 aa)).

This sequence belongs to the alpha-IPM synthase/homocitrate synthase family. LeuA type 1 subfamily. As to quaternary structure, homodimer. Requires Mn(2+) as cofactor.

The protein localises to the cytoplasm. It catalyses the reaction 3-methyl-2-oxobutanoate + acetyl-CoA + H2O = (2S)-2-isopropylmalate + CoA + H(+). It participates in amino-acid biosynthesis; L-leucine biosynthesis; L-leucine from 3-methyl-2-oxobutanoate: step 1/4. Functionally, catalyzes the condensation of the acetyl group of acetyl-CoA with 3-methyl-2-oxobutanoate (2-ketoisovalerate) to form 3-carboxy-3-hydroxy-4-methylpentanoate (2-isopropylmalate). This Citrobacter koseri (strain ATCC BAA-895 / CDC 4225-83 / SGSC4696) protein is 2-isopropylmalate synthase.